Consider the following 314-residue polypeptide: Protein phosphatase PTC7 homolog fig (314 aa).

One can recognise a PPM-type phosphatase domain in the interval 43-309; the sequence is PYLVTVVQGR…DDITLILSSV (267 aa). Positions 87, 88, and 232 each coordinate Mn(2+).

Belongs to the PP2C family. It depends on Mg(2+) as a cofactor. Requires Mn(2+) as cofactor.

It carries out the reaction O-phospho-L-seryl-[protein] + H2O = L-seryl-[protein] + phosphate. The enzyme catalyses O-phospho-L-threonyl-[protein] + H2O = L-threonyl-[protein] + phosphate. This chain is Protein phosphatase PTC7 homolog fig, found in Drosophila melanogaster (Fruit fly).